Consider the following 256-residue polypeptide: uncharacterized protein (256 aa).

Positions 1–22 are cleaved as a signal peptide; it reads MGYLKRIGMCISLLIVIIFVTS. Cysteine 23 carries N-palmitoyl cysteine lipidation. Cysteine 23 carries S-diacylglycerol cysteine lipidation.

This sequence belongs to the staphylococcal tandem lipoprotein family.

The protein localises to the cell membrane. This is an uncharacterized protein from Staphylococcus aureus (strain MRSA252).